The sequence spans 383 residues: MKNKLPPFIEIYRALIATPSISATEEALDQSNADLITLLADWFKDLGFNVEVQPVPGTRNKFNMLASIGQGAGGLLLAGHTDTVPFDDGRWTRDPFTLTEHDGKLYGLGTADMKGFFAFILDALRDVDVTKLKKPLYILATADEETSMAGARYFAETTALRPDCAIIGEPTSLQPVRAHKGHISNAIRIQGQSGHSSDPARGVNAIELMHDAIGHILQLRDNLKERYHYEAFTVPYPTLNLGHIHGGDASNRICACCELHMDIRPLPGMTFNELNGLLNDALAPVSERWPGRLTVDELHPPIPGYECPPNHQLVEVVEKLLGAKTEVVNYCTEAPFIQTLCPTLVLGPGSINQAHQPDEYLETRFIKPTRELIIQVIHHFCWH.

His-80 contributes to the Zn(2+) binding site. Asp-82 is an active-site residue. Asp-112 is a binding site for Zn(2+). Glu-144 is an active-site residue. 3 residues coordinate Zn(2+): Glu-145, Glu-169, and His-355.

This sequence belongs to the peptidase M20A family. ArgE subfamily. Homodimer. Zn(2+) is required as a cofactor. Co(2+) serves as cofactor. The cofactor is glutathione.

Its subcellular location is the cytoplasm. It catalyses the reaction N(2)-acetyl-L-ornithine + H2O = L-ornithine + acetate. The protein operates within amino-acid biosynthesis; L-arginine biosynthesis; L-ornithine from N(2)-acetyl-L-ornithine (linear): step 1/1. Functionally, catalyzes the hydrolysis of the amide bond of N(2)-acetylated L-amino acids. Cleaves the acetyl group from N-acetyl-L-ornithine to form L-ornithine, an intermediate in L-arginine biosynthesis pathway, and a branchpoint in the synthesis of polyamines. This is Acetylornithine deacetylase from Shigella boydii serotype 18 (strain CDC 3083-94 / BS512).